An 85-amino-acid polypeptide reads, in one-letter code: U4-theraphotoxin-Hhn1r (85 aa).

The first 22 residues, 1 to 22 (MKVTLIAILTCAAVLVLHTTAA), serve as a signal peptide directing secretion. Positions 23 to 48 (EELEAESQLMEVGMPDTELAAVDEER) are excised as a propeptide. Intrachain disulfides connect Cys52–Cys66, Cys56–Cys77, and Cys71–Cys82.

It belongs to the neurotoxin 12 (Hwtx-2) family. 02 (Hwtx-2) subfamily. Expressed by the venom gland.

Its subcellular location is the secreted. Postsynaptic neurotoxin. The sequence is that of U4-theraphotoxin-Hhn1r from Cyriopagopus hainanus (Chinese bird spider).